The sequence spans 180 residues: Protein Flattop (180 aa).

Residues 111 to 180 (PQISGKASGK…AGDKVLQAQS (70 aa)) form a disordered region.

It belongs to the Flattop family.

The protein localises to the cytoplasm. It is found in the cytoskeleton. The protein resides in the cilium basal body. Its subcellular location is the cell projection. It localises to the cilium. The protein localises to the apical cell membrane. It is found in the cilium axoneme. Its function is as follows. Microtubule inner protein (MIP) part of the dynein-decorated doublet microtubules (DMTs) in cilia axoneme. Acts as a regulator of cilium basal body docking and positioning in mono- and multiciliated cells. Regulates basal body docking and cilia formation in multiciliated lung cells. Regulates kinocilium positioning and stereocilia bundle morphogenesis in the inner ear. The sequence is that of Protein Flattop from Xenopus laevis (African clawed frog).